The following is a 447-amino-acid chain: Phosphoglucosamine mutase (447 aa).

Ser-104 serves as the catalytic Phosphoserine intermediate. The Mg(2+) site is built by Ser-104, Asp-243, Asp-245, and Asp-247. Ser-104 is subject to Phosphoserine.

It belongs to the phosphohexose mutase family. Mg(2+) serves as cofactor. In terms of processing, activated by phosphorylation.

The catalysed reaction is alpha-D-glucosamine 1-phosphate = D-glucosamine 6-phosphate. Functionally, catalyzes the conversion of glucosamine-6-phosphate to glucosamine-1-phosphate. The polypeptide is Phosphoglucosamine mutase (Corynebacterium glutamicum (strain R)).